Consider the following 205-residue polypeptide: Golgi apparatus membrane protein TVP23 homolog B (205 aa).

N-acetylmethionine is present on M1. Residues 1–21 show a composition bias toward acidic residues; the sequence is MLSQDSNDDTEDVSLFDAEEE. The tract at residues 1–27 is disordered; the sequence is MLSQDSNDDTEDVSLFDAEEETTNRPR. The next 4 helical transmembrane spans lie at 34-53, 54-72, 126-146, and 152-172; these read PVAS…VYLL, CELL…ILLL, IFWL…FSAL, and KWLA…YGYI.

Belongs to the TVP23 family.

The protein localises to the membrane. In Mus musculus (Mouse), this protein is Golgi apparatus membrane protein TVP23 homolog B (Tvp23b).